Here is a 125-residue protein sequence, read N- to C-terminus: uncharacterized protein (125 aa).

This is an uncharacterized protein from Homo sapiens (Human).